The sequence spans 280 residues: MGSCVSRDLFTSAHKNCPMPQGADPLNPDLPSGRTPTVAPDCVIGKDKQMDFCWDPWQRCFQTTNGYLSDSRSRPGNYNVAALATSSLVGVVQSIKDHITKPTAMARGRVAHLIEWKGWSAQPAGWELSPAEDEHYCCLPDELREARFAAGVAEQFAITEATLSAWSSLDEEELHPENSPQGIVQLQDLESIYLQDSLPSGPSQDDSLQAFSSPSPSPDSCPSPEEPPSTAGIPQPPSPELQHRRRLPGAQGPEGGTHPPGSLPSMDSGSLWEEDEVFYN.

The disordered stretch occupies residues 195–280 (QDSLPSGPSQ…LWEEDEVFYN (86 aa)). A compositionally biased stretch (polar residues) spans 197 to 211 (SLPSGPSQDDSLQAF). Pro residues predominate over residues 215-227 (SPSPDSCPSPEEP).

The protein belongs to the FAM131 family.

The polypeptide is Protein FAM131C (FAM131C) (Homo sapiens (Human)).